The chain runs to 298 residues: Bifunctional protein FolD (298 aa).

NADP(+)-binding positions include Gly166–Ser168, Ser191, and Ile232.

The protein belongs to the tetrahydrofolate dehydrogenase/cyclohydrolase family. Homodimer.

The catalysed reaction is (6R)-5,10-methylene-5,6,7,8-tetrahydrofolate + NADP(+) = (6R)-5,10-methenyltetrahydrofolate + NADPH. It catalyses the reaction (6R)-5,10-methenyltetrahydrofolate + H2O = (6R)-10-formyltetrahydrofolate + H(+). The protein operates within one-carbon metabolism; tetrahydrofolate interconversion. Its function is as follows. Catalyzes the oxidation of 5,10-methylenetetrahydrofolate to 5,10-methenyltetrahydrofolate and then the hydrolysis of 5,10-methenyltetrahydrofolate to 10-formyltetrahydrofolate. The sequence is that of Bifunctional protein FolD from Parvibaculum lavamentivorans (strain DS-1 / DSM 13023 / NCIMB 13966).